The primary structure comprises 213 residues: Octanoyltransferase (213 aa).

The 176-residue stretch at 32–207 (DSTLDEIWLV…NILALLNNPD (176 aa)) folds into the BPL/LPL catalytic domain. Substrate-binding positions include 71–78 (RGGQVTYH), 138–140 (SLG), and 151–153 (GLA). Cys-169 serves as the catalytic Acyl-thioester intermediate.

The protein belongs to the LipB family.

Its subcellular location is the cytoplasm. The enzyme catalyses octanoyl-[ACP] + L-lysyl-[protein] = N(6)-octanoyl-L-lysyl-[protein] + holo-[ACP] + H(+). It functions in the pathway protein modification; protein lipoylation via endogenous pathway; protein N(6)-(lipoyl)lysine from octanoyl-[acyl-carrier-protein]: step 1/2. In terms of biological role, catalyzes the transfer of endogenously produced octanoic acid from octanoyl-acyl-carrier-protein onto the lipoyl domains of lipoate-dependent enzymes. Lipoyl-ACP can also act as a substrate although octanoyl-ACP is likely to be the physiological substrate. In Escherichia coli O8 (strain IAI1), this protein is Octanoyltransferase.